A 171-amino-acid polypeptide reads, in one-letter code: Putative MucR family transcriptional regulatory protein y4pD (171 aa).

The protein belongs to the ros/MucR family.

This Sinorhizobium fredii (strain NBRC 101917 / NGR234) protein is Putative MucR family transcriptional regulatory protein y4pD.